A 215-amino-acid chain; its full sequence is Beta-crystallin A3 (215 aa).

Residue Met1 is modified to N-acetylmethionine. The span at 1–16 (METQAEQQELETLPTT) shows a compositional bias: low complexity. The disordered stretch occupies residues 1–29 (METQAEQQELETLPTTKMAQTNPTPGSLG). The N-terminal arm stretch occupies residues 1–30 (METQAEQQELETLPTTKMAQTNPTPGSLGP). Glu2 carries the N-acetylalanine modification. 2 Beta/gamma crystallin 'Greek key' domains span residues 31 to 70 (WKIT…KVES) and 71 to 117 (GAWI…RPIC). S-glutathionyl cysteine; alternate is present on residues Cys82 and Cys117. An S-methylcysteine; alternate mark is found at Cys82 and Cys117. The connecting peptide stretch occupies residues 118-123 (SANHKE). 2 consecutive Beta/gamma crystallin 'Greek key' domains span residues 124 to 165 (SKMT…KIQS) and 166 to 214 (GAWV…RRIQ). The residue at position 185 (Cys185) is an S-methylcysteine.

It belongs to the beta/gamma-crystallin family. As to quaternary structure, homo/heterodimer, or complexes of higher-order. The structure of beta-crystallin oligomers seems to be stabilized through interactions between the N-terminal arms. Interacts with CRYBA1. Post-translationally, specific cleavages in the N-terminal arm occur during lens maturation and give rise to several truncated forms. Cleavages do not seem to have adverse effects on solubility. In terms of processing, S-methylation and glutathionylation occur in normal young lenses and do not seem to be detrimental.

Its function is as follows. Crystallins are the dominant structural components of the vertebrate eye lens. The sequence is that of Beta-crystallin A3 from Homo sapiens (Human).